The sequence spans 495 residues: ATP synthase subunit beta, chloroplastic (495 aa).

172–179 (GGAGVGKT) is a binding site for ATP.

It belongs to the ATPase alpha/beta chains family. F-type ATPases have 2 components, CF(1) - the catalytic core - and CF(0) - the membrane proton channel. CF(1) has five subunits: alpha(3), beta(3), gamma(1), delta(1), epsilon(1). CF(0) has four main subunits: a(1), b(1), b'(1) and c(9-12).

The protein resides in the plastid. It is found in the chloroplast thylakoid membrane. The catalysed reaction is ATP + H2O + 4 H(+)(in) = ADP + phosphate + 5 H(+)(out). In terms of biological role, produces ATP from ADP in the presence of a proton gradient across the membrane. The catalytic sites are hosted primarily by the beta subunits. The chain is ATP synthase subunit beta, chloroplastic from Hyacinthus orientalis (Common hyacinth).